We begin with the raw amino-acid sequence, 201 residues long: Ras-related protein Ral-a (201 aa).

18 to 25 serves as a coordination point for GTP; it reads GSGGVGKS. The short motif at 40–48 is the Effector region element; it reads YEPTKADSY. GTP-binding positions include 65 to 69 and 124 to 127; these read DTAGQ and NKCD. A Cysteine methyl ester modification is found at cysteine 198. Cysteine 198 carries S-geranylgeranyl cysteine lipidation. Positions 199–201 are cleaved as a propeptide — removed in mature form; that stretch reads TLL.

It belongs to the small GTPase superfamily. Ras family.

Its subcellular location is the cell membrane. The protein resides in the cleavage furrow. The protein localises to the midbody. It is found in the midbody ring. It carries out the reaction GTP + H2O = GDP + phosphate + H(+). This Drosophila melanogaster (Fruit fly) protein is Ras-related protein Ral-a (Rala).